The following is a 162-amino-acid chain: Shikimate kinase (162 aa).

11–16 is an ATP binding site; the sequence is GSGKSS. Mg(2+) is bound at residue S15. Residues D33, R57, and G80 each coordinate substrate. R116 lines the ATP pocket. Position 132 (R132) interacts with substrate.

Belongs to the shikimate kinase family. Monomer. Mg(2+) is required as a cofactor.

The protein localises to the cytoplasm. The catalysed reaction is shikimate + ATP = 3-phosphoshikimate + ADP + H(+). It participates in metabolic intermediate biosynthesis; chorismate biosynthesis; chorismate from D-erythrose 4-phosphate and phosphoenolpyruvate: step 5/7. Functionally, catalyzes the specific phosphorylation of the 3-hydroxyl group of shikimic acid using ATP as a cosubstrate. The polypeptide is Shikimate kinase (Helicobacter pylori (strain HPAG1)).